The primary structure comprises 339 residues: Phosphoribosylformylglycinamidine cyclo-ligase (339 aa).

Belongs to the AIR synthase family.

It is found in the cytoplasm. The enzyme catalyses 2-formamido-N(1)-(5-O-phospho-beta-D-ribosyl)acetamidine + ATP = 5-amino-1-(5-phospho-beta-D-ribosyl)imidazole + ADP + phosphate + H(+). The protein operates within purine metabolism; IMP biosynthesis via de novo pathway; 5-amino-1-(5-phospho-D-ribosyl)imidazole from N(2)-formyl-N(1)-(5-phospho-D-ribosyl)glycinamide: step 2/2. The protein is Phosphoribosylformylglycinamidine cyclo-ligase of Methanobrevibacter smithii (strain ATCC 35061 / DSM 861 / OCM 144 / PS).